The sequence spans 224 residues: Orotidine 5'-phosphate decarboxylase (224 aa).

Residues Asp-10, Lys-32, 59 to 68 (DLKLHDIPNT), Thr-115, Arg-175, Gln-184, Gly-204, and Arg-205 contribute to the substrate site. Lys-61 serves as the catalytic Proton donor.

Belongs to the OMP decarboxylase family. Type 1 subfamily. Homodimer.

It carries out the reaction orotidine 5'-phosphate + H(+) = UMP + CO2. The protein operates within pyrimidine metabolism; UMP biosynthesis via de novo pathway; UMP from orotate: step 2/2. Functionally, catalyzes the decarboxylation of orotidine 5'-monophosphate (OMP) to uridine 5'-monophosphate (UMP). This Sphingopyxis alaskensis (strain DSM 13593 / LMG 18877 / RB2256) (Sphingomonas alaskensis) protein is Orotidine 5'-phosphate decarboxylase.